The chain runs to 201 residues: FMN-dependent NADH:quinone oxidoreductase (201 aa).

FMN-binding positions include Ser-10, 16 to 18 (SQS), 96 to 99 (MYNF), and 140 to 143 (SRGG).

The protein belongs to the azoreductase type 1 family. Homodimer. FMN is required as a cofactor.

It carries out the reaction 2 a quinone + NADH + H(+) = 2 a 1,4-benzosemiquinone + NAD(+). The catalysed reaction is N,N-dimethyl-1,4-phenylenediamine + anthranilate + 2 NAD(+) = 2-(4-dimethylaminophenyl)diazenylbenzoate + 2 NADH + 2 H(+). Its function is as follows. Quinone reductase that provides resistance to thiol-specific stress caused by electrophilic quinones. Functionally, also exhibits azoreductase activity. Catalyzes the reductive cleavage of the azo bond in aromatic azo compounds to the corresponding amines. This Escherichia coli O6:K15:H31 (strain 536 / UPEC) protein is FMN-dependent NADH:quinone oxidoreductase.